We begin with the raw amino-acid sequence, 335 residues long: Methyltransferase pgmE (335 aa).

This sequence belongs to the methyltransferase superfamily.

Its pathway is pigment biosynthesis. It functions in the pathway secondary metabolite biosynthesis. Its function is as follows. Methyltransferase; part of the gene cluster that mediates the biosynthesis of pleosporalin A, ascomycone A, as well as a third cryptic naphthoquinone derived pigment, all responsible for the coloration of conidia. Essential for the production of pleosporalin A, but not the 2 other final products. The pathway begins with the biosynthesis of the cyclized heptaketide 3-acetonyl-1,6,8-trihydroxy-2-naphthaldehyde by the NR-PKS pgmA. The C-6 hydroxyl group is further methylated by the O-methyltransferase pgmB to yield fusarubinaldehyde which is in turn oxidized by the cytochrome P450 monooxygenase pgmC at C-9. The C-1 hydroxyl group is then methylated spontaneously. Although pgmE, pgmD and pgmH are essential for the production of pleosporalin A, it is not the case for the 2 other final products and it remains difficult to assign a specific function to each enzyme. PgmF and pgmG seem not to be involved in pigment biosynthesis although they were regulated by the cluster-specific transcription factor pgmR. This is Methyltransferase pgmE from Aspergillus terreus (strain NIH 2624 / FGSC A1156).